The chain runs to 52 residues: Dibenzothiophene metabolism operon protein NahQ/DoxH (52 aa).

The protein operates within aromatic compound metabolism; naphthalene degradation. May be involved in the conversion of 2-hydroxy-4-(2'-oxo-3,5-cyclohexadienyl)-buta-2,4-dienoate to cis-O-hydroxybenzylidenepyruvate. DoxH and DoxJ encode different enzymes that may have interchangeable functions. This chain is Dibenzothiophene metabolism operon protein NahQ/DoxH (nahQ), found in Pseudomonas putida (Arthrobacter siderocapsulatus).